Consider the following 496-residue polypeptide: Hexokinase-2 (496 aa).

The chain crosses the membrane as a helical span at residues 4–24; that stretch reads ATVGAVVVGTAAAVAVAALIM. The 453-residue stretch at 35-487 folds into the Hexokinase domain; sequence ARARAILKEF…SGIGAALLAA (453 aa). The interval 90-228 is hexokinase small subdomain; the sequence is TGDEGGVFYA…EIDMRVSALV (139 aa). Residues G104, T105, and N106 each coordinate ADP. D-glucose contacts are provided by T194, K195, N229, and D230. The segment at 229–476 is hexokinase large subdomain; sequence NDTVGTLAGG…TSIVFKHAND (248 aa). T253 contributes to the ADP binding site. 3 residues coordinate D-glucose: N256, E284, and E315. G441 serves as a coordination point for ADP.

The protein belongs to the hexokinase family.

It is found in the plastid. The protein localises to the chloroplast outer membrane. It catalyses the reaction a D-hexose + ATP = a D-hexose 6-phosphate + ADP + H(+). The catalysed reaction is D-fructose + ATP = D-fructose 6-phosphate + ADP + H(+). It carries out the reaction D-glucose + ATP = D-glucose 6-phosphate + ADP + H(+). It functions in the pathway carbohydrate metabolism; hexose metabolism. It participates in carbohydrate degradation; glycolysis; D-glyceraldehyde 3-phosphate and glycerone phosphate from D-glucose: step 1/4. Its function is as follows. Fructose and glucose phosphorylating enzyme. May be involved in the phosphorylation of glucose during the export from plastids to cytosol. Seems neither to be involved in cell sugar sensing nor in carbohydrate metabolism in tuber. This is Hexokinase-2 (HXK2) from Solanum tuberosum (Potato).